A 478-amino-acid polypeptide reads, in one-letter code: ATP-dependent RNA helicase DDX19A (478 aa).

At A2 the chain carries N-acetylalanine. An N-terminal lobe region spans residues 2-299; that stretch reads ATDSWALAVD…DPNVIKLKRE (298 aa). K26 is covalently cross-linked (Glycyl lysine isopeptide (Lys-Gly) (interchain with G-Cter in SUMO1); alternate). K26 is covalently cross-linked (Glycyl lysine isopeptide (Lys-Gly) (interchain with G-Cter in SUMO2); alternate). T42 carries the phosphothreonine modification. Positions 54 to 67 are N-terminal helix; it reads DRAAQSLLNKLIRS. The short motif at 91-119 is the Q motif element; sequence KSFEELRLKPQLLQGVYAMGFNRPSKIQE. ATP contacts are provided by residues Q118 and 137–144; that span reads SQSGTGKT. One can recognise a Helicase ATP-binding domain in the interval 124–294; it reads MMLAEPPQNL…QKVVPDPNVI (171 aa). A DEAD box motif is present at residues 241 to 244; the sequence is DEAD. A C-terminal lobe region spans residues 300 to 478; sequence EETLDTIKQY…DLDEIEKIAN (179 aa). The 169-residue stretch at 305–473 folds into the Helicase C-terminal domain; the sequence is TIKQYYVLCS…RLDTDDLDEI (169 aa). Residues R428 and R431 each coordinate ATP.

This sequence belongs to the DEAD box helicase family. DDX19/DBP5 subfamily.

The protein resides in the cytoplasm. Its subcellular location is the nucleus. It localises to the nucleoplasm. It carries out the reaction ATP + H2O = ADP + phosphate + H(+). Functionally, ATP-dependent RNA helicase involved in mRNA export from the nucleus. Rather than unwinding RNA duplexes, DDX19 functions as a remodeler of ribonucleoprotein particles, whereby proteins bound to nuclear mRNA are dissociated and replaced by cytoplasmic mRNA binding proteins. The polypeptide is ATP-dependent RNA helicase DDX19A (DDX19A) (Homo sapiens (Human)).